A 464-amino-acid polypeptide reads, in one-letter code: Protein FAM90A16 (464 aa).

Disordered regions lie at residues 1–42 (MMAR…DPRL), 70–389 (PATL…HDGA), and 415–437 (HSPE…SEAP). Basic and acidic residues-rich tracts occupy residues 74 to 89 (GKKE…KPRV) and 97 to 114 (NKDK…DPQR). Residues 180–197 (LASLSPLRKASLSSSSSL) show a composition bias toward low complexity.

Belongs to the FAM90 family.

This is Protein FAM90A16 from Homo sapiens (Human).